Here is a 350-residue protein sequence, read N- to C-terminus: MPVLHNRISNDALKAKMLAESEPRTTISFYKYFHIADPKATRDALYQLFTALNVFGRVYLAHEGINAQISVPASNVETFRAQLYAFDPALEGLRLNIALEDDGKSFWVLRMKVRDRIVADGIDDPHFDASNVGEYLQAAEVNAMLDDPDALFIDMRNHYEYEVGHFENALEIPADTFREQLPKAVEMMQAHKDKKIVMYCTGGIRCEKASAWMKHNGFNKVWHIEGGIIEYARKAREQGLPVRFIGKNFVFDERMGERISDEIIAHCHQCGAPCDSHTNCKNDGCHLLFIQCPVCAEKYKGCCSEICCEESALPPEEQRRRRAGRENGNKIFNKSRGRLNTTLGIPDPTE.

A Rhodanese domain is found at 146–240 (DDPDALFIDM…YARKAREQGL (95 aa)). Cys200 functions as the Cysteine persulfide intermediate in the catalytic mechanism.

It belongs to the TrhO family.

It catalyses the reaction uridine(34) in tRNA + AH2 + O2 = 5-hydroxyuridine(34) in tRNA + A + H2O. Its function is as follows. Catalyzes oxygen-dependent 5-hydroxyuridine (ho5U) modification at position 34 in tRNAs, the first step in 5-carboxymethoxyuridine (cmo5U) biosynthesis. May be part of an alternate pathway, which is able to bypass cmo5U biogenesis in a subset of tRNAs under aerobic conditions. This is tRNA uridine(34) hydroxylase from Escherichia coli (strain SMS-3-5 / SECEC).